Reading from the N-terminus, the 460-residue chain is Putative protein p41 (460 aa).

Positions 14–186 (INHLLDIKRS…WGQAWFVDQG (173 aa)) constitute a Helicase ATP-binding domain.

This Escherichia coli (Bacteriophage APSE-1) protein is Putative protein p41 (41).